Here is a 226-residue protein sequence, read N- to C-terminus: Glutathione peroxidase 3 (226 aa).

Positions 1–24 (MARLLQASCLLSLLLAGFVPQSRG) are cleaved as a signal peptide. U73 is an active-site residue. Position 73 (U73) is a non-standard amino acid, selenocysteine.

Belongs to the glutathione peroxidase family. As to quaternary structure, homotetramer. In terms of tissue distribution, secreted in plasma.

The protein resides in the secreted. It catalyses the reaction 2 glutathione + H2O2 = glutathione disulfide + 2 H2O. The catalysed reaction is tert-butyl hydroperoxide + 2 glutathione = tert-butanol + glutathione disulfide + H2O. Protects cells and enzymes from oxidative damage, by catalyzing the reduction of hydrogen peroxide, lipid peroxides and organic hydroperoxide, by glutathione. This chain is Glutathione peroxidase 3, found in Hylobates lar (Lar gibbon).